The chain runs to 304 residues: Methionyl-tRNA formyltransferase (304 aa).

(6S)-5,6,7,8-tetrahydrofolate is bound at residue 110–113; sequence SLLP.

This sequence belongs to the Fmt family.

It carries out the reaction L-methionyl-tRNA(fMet) + (6R)-10-formyltetrahydrofolate = N-formyl-L-methionyl-tRNA(fMet) + (6S)-5,6,7,8-tetrahydrofolate + H(+). In terms of biological role, attaches a formyl group to the free amino group of methionyl-tRNA(fMet). The formyl group appears to play a dual role in the initiator identity of N-formylmethionyl-tRNA by promoting its recognition by IF2 and preventing the misappropriation of this tRNA by the elongation apparatus. This is Methionyl-tRNA formyltransferase from Gluconobacter oxydans (strain 621H) (Gluconobacter suboxydans).